Reading from the N-terminus, the 200-residue chain is Interferon lambda-2 (200 aa).

An N-terminal signal peptide occupies residues M1 to A25.

It belongs to the lambda interferon family.

It is found in the secreted. Its function is as follows. Cytokine with antiviral, antitumour and immunomodulatory activities. Plays a critical role in the antiviral host defense, predominantly in the epithelial tissues. Acts as a ligand for the heterodimeric class II cytokine receptor composed of IL10RB and IFNLR1, and receptor engagement leads to the activation of the JAK/STAT signaling pathway resulting in the expression of IFN-stimulated genes (ISG), which mediate the antiviral state. Has a restricted receptor distribution and therefore restricted targets: is primarily active in epithelial cells and this cell type-selective action is because of the epithelial cell-specific expression of its receptor IFNLR1. Seems not to be essential for early virus-activated host defense in vaginal infection, but plays an important role in Toll-like receptor (TLR)-induced antiviral defense. Plays a significant role in the antiviral immune defense in the intestinal epithelium. Exerts an immunomodulatory effect by up-regulating MHC class I antigen expression. The chain is Interferon lambda-2 (IFNL2) from Homo sapiens (Human).